The chain runs to 395 residues: Elongation factor Tu (395 aa).

The region spanning 10 to 204 is the tr-type G domain; that stretch reads LPHVNIGTIG…AVDEYIPTPQ (195 aa). The segment at 19-26 is G1; sequence GHVDHGKT. 19–26 is a GTP binding site; it reads GHVDHGKT. A Mg(2+)-binding site is contributed by T26. Residues 60-64 are G2; the sequence is GITIN. The tract at residues 81–84 is G3; that stretch reads DCPG. GTP contacts are provided by residues 81–85 and 136–139; these read DCPGH and NKCD. Positions 136–139 are G4; that stretch reads NKCD. A G5 region spans residues 174 to 176; it reads SAL.

The protein belongs to the TRAFAC class translation factor GTPase superfamily. Classic translation factor GTPase family. EF-Tu/EF-1A subfamily. As to quaternary structure, monomer.

It is found in the cytoplasm. It carries out the reaction GTP + H2O = GDP + phosphate + H(+). Its function is as follows. GTP hydrolase that promotes the GTP-dependent binding of aminoacyl-tRNA to the A-site of ribosomes during protein biosynthesis. The polypeptide is Elongation factor Tu (Mycoplasma capricolum subsp. capricolum (strain California kid / ATCC 27343 / NCTC 10154)).